The following is a 115-amino-acid chain: NADH-ubiquinone oxidoreductase chain 3 (115 aa).

3 consecutive transmembrane segments (helical) span residues 3 to 23, 55 to 75, and 86 to 106; these read LALA…ITFW, FFLV…LLPL, and LTIA…AYEW.

It belongs to the complex I subunit 3 family. In terms of assembly, core subunit of respiratory chain NADH dehydrogenase (Complex I) which is composed of 45 different subunits. Interacts with TMEM186. Interacts with TMEM242.

It localises to the mitochondrion inner membrane. The catalysed reaction is a ubiquinone + NADH + 5 H(+)(in) = a ubiquinol + NAD(+) + 4 H(+)(out). In terms of biological role, core subunit of the mitochondrial membrane respiratory chain NADH dehydrogenase (Complex I) which catalyzes electron transfer from NADH through the respiratory chain, using ubiquinone as an electron acceptor. Essential for the catalytic activity of complex I. This is NADH-ubiquinone oxidoreductase chain 3 from Hylobates lar (Lar gibbon).